A 381-amino-acid polypeptide reads, in one-letter code: GDP-mannose transporter (381 aa).

The span at methionine 1–valine 12 shows a compositional bias: basic and acidic residues. The segment at methionine 1–arginine 28 is disordered. Over methionine 1 to serine 36 the chain is Cytoplasmic. A helical membrane pass occupies residues leucine 37–valine 57. The Lumenal portion of the chain corresponds to threonine 58–aspartate 67. Residues phenylalanine 68–isoleucine 88 form a helical membrane-spanning segment. The Cytoplasmic portion of the chain corresponds to cysteine 89–lysine 107. The helical transmembrane segment at tryptophan 108–leucine 126 threads the bilayer. At lysine 127 to serine 130 the chain is on the lumenal side. The chain crosses the membrane as a helical span at residues isoleucine 131–phenylalanine 153. Residues glycine 154–threonine 161 are Cytoplasmic-facing. Residues leucine 162–leucine 184 form a helical membrane-spanning segment. At asparagine 185–serine 199 the chain is on the lumenal side. Residues threonine 200–leucine 220 form a helical membrane-spanning segment. At serine 221–leucine 242 the chain is on the cytoplasmic side. Residues leucine 243–isoleucine 263 form a helical membrane-spanning segment. Residues glutamine 264–threonine 274 are Lumenal-facing. A helical membrane pass occupies residues valine 275–tryptophan 295. Over alanine 296–threonine 303 the chain is Cytoplasmic. A helical transmembrane segment spans residues threonine 304–phenylalanine 324. The Lumenal segment spans residues aspartate 325–proline 327. The chain crosses the membrane as a helical span at residues valine 328–valine 348. Residues alanine 349–alanine 381 are Cytoplasmic-facing.

Belongs to the TPT transporter family. SLC35D subfamily. As to quaternary structure, homooligomer.

It localises to the golgi apparatus membrane. The protein resides in the cytoplasmic vesicle membrane. The protein localises to the endoplasmic reticulum membrane. Involved in the import of GDP-mannose from the cytoplasm into the Golgi lumen. The polypeptide is GDP-mannose transporter (VRG4) (Phaeosphaeria nodorum (strain SN15 / ATCC MYA-4574 / FGSC 10173) (Glume blotch fungus)).